The primary structure comprises 308 residues: Oligopeptide transport ATP-binding protein AmiF (308 aa).

The ABC transporter domain maps to 6-251 (VEIKDLEISF…PIHPYTQALL (246 aa)). Residue 42–49 (GESGSGKT) coordinates ATP.

This sequence belongs to the ABC transporter superfamily.

Its subcellular location is the cell membrane. Part of the binding-protein-dependent transport system for oligopeptides. Probably responsible for energy coupling to the transport system. In Streptococcus pneumoniae serotype 4 (strain ATCC BAA-334 / TIGR4), this protein is Oligopeptide transport ATP-binding protein AmiF (amiF).